A 102-amino-acid polypeptide reads, in one-letter code: Glutaredoxin 1 (102 aa).

The region spanning 1-96 is the Glutaredoxin domain; sequence MNKAILHTII…KLLEGQPKKK (96 aa). C17 and C20 form a disulfide bridge.

This sequence belongs to the glutaredoxin family. Monomer.

It localises to the cytoplasm. In terms of biological role, has a glutathione-disulfide oxidoreductase activity in the presence of NADPH and glutathione reductase. Reduces low molecular weight disulfides and proteins. The sequence is that of Glutaredoxin 1 (grxC1) from Rickettsia felis (strain ATCC VR-1525 / URRWXCal2) (Rickettsia azadi).